A 415-amino-acid polypeptide reads, in one-letter code: Vascular endothelial growth factor C (415 aa).

The signal sequence occupies residues 1–31 (MHLLCFLSLACSLLAAALIPGPREAPATVAA). Positions 32–107 (FESGLGFSEA…RTGDTVKLAA (76 aa)) are excised as a propeptide. 3 disulfides stabilise this stretch: C127/C169, C158/C205, and C162/C207. N-linked (GlcNAc...) asparagine glycosylation is found at N171, N201, and N236. A propeptide spanning residues 224–415 (SLPATLPQCQ…PSYWKRPHLN (192 aa)) is cleaved from the precursor. 4 consecutive repeat copies span residues 276-291 (CGPNKELDEDTCQCVC), 300-315 (CGPHKELDRDSCQCVC), 324-339 (CGANREFDENTCQCVC), and 343-358 (CPRNQPLNPGKCACEC). Positions 276–358 (CGPNKELDED…LNPGKCACEC (83 aa)) are 4 X 16 AA repeats of C-X(10)-C-X-C-X(1,3)-C.

The protein belongs to the PDGF/VEGF growth factor family. In terms of assembly, homodimer; non-covalent and antiparallel. Interacts with FLT4/VEGFR3; the interaction is required for FLT4/VEGFR3 homodimarization and activation. Undergoes a complex proteolytic maturation which generates a variety of processed secreted forms with increased activity toward VEGFR-3, but only the fully processed form could activate VEGFR-2. VEGF-C first form an antiparallel homodimer linked by disulfide bonds. Before secretion, a cleavage occurs between Arg-223 and Ser-224 producing a heterotetramer. The next extracellular step of the processing removes the N-terminal propeptide. Finally the mature VEGF-C is composed mostly of two VEGF homology domains (VHDs) bound by non-covalent interactions. In terms of tissue distribution, highly expressed in the lung, ovary, preputial gland and the adrenal gland. Expressed in the post-pubertal mammary glands.

It localises to the secreted. Growth factor active in angiogenesis, and endothelial cell growth, stimulating their proliferation and migration and also has effects on the permeability of blood vessels. May function in angiogenesis of the venous and lymphatic vascular systems during embryogenesis, and also in the maintenance of differentiated lymphatic endothelium in adults. Binds and activates KDR/VEGFR2 and FLT4/VEGFR3 receptors. This chain is Vascular endothelial growth factor C (Vegfc), found in Rattus norvegicus (Rat).